The following is a 291-amino-acid chain: Transcription antitermination protein NusB (291 aa).

Belongs to the NusB family.

In terms of biological role, involved in transcription antitermination. Required for transcription of ribosomal RNA (rRNA) genes. Binds specifically to the boxA antiterminator sequence of the ribosomal RNA (rrn) operons. This is Transcription antitermination protein NusB from Synechococcus sp. (strain JA-2-3B'a(2-13)) (Cyanobacteria bacterium Yellowstone B-Prime).